A 272-amino-acid polypeptide reads, in one-letter code: Undecaprenyl-diphosphatase (272 aa).

The next 8 helical transmembrane spans lie at 1–21 (MSYL…FLPI), 38–58 (PGAT…VVFF), 84–104 (VRMG…GYLF), 112–132 (FRSL…LGLA), 145–165 (MTYG…VPGV), 183–203 (PVAA…SGLY), 219–239 (QTAV…AGLM), and 250–270 (FVVY…TGAI).

The protein belongs to the UppP family.

Its subcellular location is the cell membrane. It carries out the reaction di-trans,octa-cis-undecaprenyl diphosphate + H2O = di-trans,octa-cis-undecaprenyl phosphate + phosphate + H(+). In terms of biological role, catalyzes the dephosphorylation of undecaprenyl diphosphate (UPP). Confers resistance to bacitracin. In Clavibacter michiganensis subsp. michiganensis (strain NCPPB 382), this protein is Undecaprenyl-diphosphatase.